Here is a 411-residue protein sequence, read N- to C-terminus: Putative BMP-2-inducible kinase-like protein (411 aa).

Disordered stretches follow at residues 1–87, 215–280, and 392–411; these read MIAP…TQDI, SQQQ…RVSQ, and QQSQPVELDPFGAAPFPSKQ. Composition is skewed to basic and acidic residues over residues 8-18 and 53-68; these read SSEEEGQKDEE and EKRSSDSDYEQAKAKY. Residues 47-71 adopt a coiled-coil conformation; that stretch reads EDEEEEEKRSSDSDYEQAKAKYSDM. Composition is skewed to basic residues over residues 220–234 and 243–258; these read VKQRSLQKLSSRQRR and NGKRHHGTPTSKKKTL.

This chain is Putative BMP-2-inducible kinase-like protein (BMP2KL), found in Homo sapiens (Human).